The primary structure comprises 252 residues: Carboxy-S-adenosyl-L-methionine synthase (252 aa).

S-adenosyl-L-methionine-binding positions include Tyr-45, 70 to 72, 95 to 96, 123 to 124, Asn-138, and Arg-205; these read GCS, DN, and DI.

Belongs to the class I-like SAM-binding methyltransferase superfamily. Cx-SAM synthase family. As to quaternary structure, homodimer.

The catalysed reaction is prephenate + S-adenosyl-L-methionine = carboxy-S-adenosyl-L-methionine + 3-phenylpyruvate + H2O. Catalyzes the conversion of S-adenosyl-L-methionine (SAM) to carboxy-S-adenosyl-L-methionine (Cx-SAM). In Photorhabdus laumondii subsp. laumondii (strain DSM 15139 / CIP 105565 / TT01) (Photorhabdus luminescens subsp. laumondii), this protein is Carboxy-S-adenosyl-L-methionine synthase.